A 506-amino-acid polypeptide reads, in one-letter code: Histidine ammonia-lyase (506 aa).

Positions 143 to 145 form a cross-link, 5-imidazolinone (Ala-Gly); it reads ASG. S144 bears the 2,3-didehydroalanine (Ser) mark.

It belongs to the PAL/histidase family. Post-translationally, contains an active site 4-methylidene-imidazol-5-one (MIO), which is formed autocatalytically by cyclization and dehydration of residues Ala-Ser-Gly.

The protein localises to the cytoplasm. It carries out the reaction L-histidine = trans-urocanate + NH4(+). It participates in amino-acid degradation; L-histidine degradation into L-glutamate; N-formimidoyl-L-glutamate from L-histidine: step 1/3. This is Histidine ammonia-lyase from Salmonella arizonae (strain ATCC BAA-731 / CDC346-86 / RSK2980).